The following is a 404-amino-acid chain: Acetylornithine aminotransferase (404 aa).

Pyridoxal 5'-phosphate-binding positions include 113–114 (GT) and F139. Residue R142 participates in N(2)-acetyl-L-ornithine binding. 224-227 (DEVQ) serves as a coordination point for pyridoxal 5'-phosphate. An N6-(pyridoxal phosphate)lysine modification is found at K253. S281 is a binding site for N(2)-acetyl-L-ornithine. Position 282 (T282) interacts with pyridoxal 5'-phosphate.

The protein belongs to the class-III pyridoxal-phosphate-dependent aminotransferase family. ArgD subfamily. In terms of assembly, homodimer. Requires pyridoxal 5'-phosphate as cofactor.

It localises to the cytoplasm. It catalyses the reaction N(2)-acetyl-L-ornithine + 2-oxoglutarate = N-acetyl-L-glutamate 5-semialdehyde + L-glutamate. Its pathway is amino-acid biosynthesis; L-arginine biosynthesis; N(2)-acetyl-L-ornithine from L-glutamate: step 4/4. In Mycobacterium leprae (strain TN), this protein is Acetylornithine aminotransferase.